The following is a 596-amino-acid chain: Aspartate--tRNA(Asp/Asn) ligase (596 aa).

An L-aspartate-binding site is contributed by Glu175. Residues 199 to 202 (QQYK) form an aspartate region. 2 residues coordinate L-aspartate: Arg221 and His454. Residue 221-223 (RDE) coordinates ATP. Glu488 is an ATP binding site. Arg495 provides a ligand contact to L-aspartate. 540 to 543 (GIDR) lines the ATP pocket.

It belongs to the class-II aminoacyl-tRNA synthetase family. Type 1 subfamily. As to quaternary structure, homodimer.

Its subcellular location is the cytoplasm. It carries out the reaction tRNA(Asx) + L-aspartate + ATP = L-aspartyl-tRNA(Asx) + AMP + diphosphate. Its function is as follows. Aspartyl-tRNA synthetase with relaxed tRNA specificity since it is able to aspartylate not only its cognate tRNA(Asp) but also tRNA(Asn). Reaction proceeds in two steps: L-aspartate is first activated by ATP to form Asp-AMP and then transferred to the acceptor end of tRNA(Asp/Asn). This chain is Aspartate--tRNA(Asp/Asn) ligase, found in Mesorhizobium japonicum (strain LMG 29417 / CECT 9101 / MAFF 303099) (Mesorhizobium loti (strain MAFF 303099)).